A 256-amino-acid chain; its full sequence is Imidazole glycerol phosphate synthase subunit hisF1 (256 aa).

Active-site residues include Asp11 and Asp130.

The protein belongs to the HisA/HisF family. Heterodimer of HisH and HisF.

It is found in the cytoplasm. The enzyme catalyses 5-[(5-phospho-1-deoxy-D-ribulos-1-ylimino)methylamino]-1-(5-phospho-beta-D-ribosyl)imidazole-4-carboxamide + L-glutamine = D-erythro-1-(imidazol-4-yl)glycerol 3-phosphate + 5-amino-1-(5-phospho-beta-D-ribosyl)imidazole-4-carboxamide + L-glutamate + H(+). Its pathway is amino-acid biosynthesis; L-histidine biosynthesis; L-histidine from 5-phospho-alpha-D-ribose 1-diphosphate: step 5/9. Functionally, IGPS catalyzes the conversion of PRFAR and glutamine to IGP, AICAR and glutamate. The HisF subunit catalyzes the cyclization activity that produces IGP and AICAR from PRFAR using the ammonia provided by the HisH subunit. The chain is Imidazole glycerol phosphate synthase subunit hisF1 (hisF1) from Parasynechococcus marenigrum (strain WH8102).